The following is a 217-amino-acid chain: Outer-membrane lipoprotein LolB (217 aa).

The N-terminal stretch at 1 to 20 (MSKALRTLALSGLVLVGLSA) is a signal peptide. Residue Cys21 is the site of N-palmitoyl cysteine attachment. A lipid anchor (S-diacylglycerol cysteine) is attached at Cys21.

The protein belongs to the LolB family. Monomer.

The protein localises to the cell outer membrane. Functionally, plays a critical role in the incorporation of lipoproteins in the outer membrane after they are released by the LolA protein. The sequence is that of Outer-membrane lipoprotein LolB from Xanthomonas oryzae pv. oryzae (strain MAFF 311018).